Consider the following 130-residue polypeptide: Small ribosomal subunit protein uS9 (130 aa).

The protein belongs to the universal ribosomal protein uS9 family.

The polypeptide is Small ribosomal subunit protein uS9 (Oceanobacillus iheyensis (strain DSM 14371 / CIP 107618 / JCM 11309 / KCTC 3954 / HTE831)).